Consider the following 428-residue polypeptide: Histidine--tRNA ligase (428 aa).

This sequence belongs to the class-II aminoacyl-tRNA synthetase family. Homodimer.

It localises to the cytoplasm. It catalyses the reaction tRNA(His) + L-histidine + ATP = L-histidyl-tRNA(His) + AMP + diphosphate + H(+). The polypeptide is Histidine--tRNA ligase (Sorangium cellulosum (strain So ce56) (Polyangium cellulosum (strain So ce56))).